Reading from the N-terminus, the 136-residue chain is Basic phospholipase A2 Tgc-K49 (136 aa).

Positions 1–15 are cleaved as a signal peptide; it reads MRTLWIVAVLLVGEG. Intrachain disulfides connect Cys-41–Cys-130, Cys-43–Cys-59, Cys-58–Cys-110, Cys-64–Cys-136, Cys-65–Cys-103, Cys-72–Cys-96, and Cys-90–Cys-101. His-62 is a catalytic residue. The active site involves Asp-104.

The protein belongs to the phospholipase A2 family. Group II subfamily. K49 sub-subfamily. Expressed by the venom gland.

Its subcellular location is the secreted. The catalysed reaction is a 1,2-diacyl-sn-glycero-3-phosphocholine + H2O = a 1-acyl-sn-glycero-3-phosphocholine + a fatty acid + H(+). Its function is as follows. PLA2 catalyzes the calcium-dependent hydrolysis of the 2-acyl groups in 3-sn-phosphoglycerides. The polypeptide is Basic phospholipase A2 Tgc-K49 (Trimeresurus gracilis (Kikuchi habu)).